The sequence spans 249 residues: Uridylate kinase (249 aa).

15–18 lines the ATP pocket; that stretch reads KLSG. Residues 23-28 form an involved in allosteric activation by GTP region; the sequence is GEEGFG. Residue Gly-57 participates in UMP binding. Residues Gly-58 and Arg-62 each coordinate ATP. UMP contacts are provided by residues Asp-77 and 138–145; that span reads TGNPFFTT. ATP-binding residues include Thr-165, Phe-171, and Asp-174.

Belongs to the UMP kinase family. Homohexamer.

Its subcellular location is the cytoplasm. The catalysed reaction is UMP + ATP = UDP + ADP. It functions in the pathway pyrimidine metabolism; CTP biosynthesis via de novo pathway; UDP from UMP (UMPK route): step 1/1. Its activity is regulated as follows. Allosterically activated by GTP. Inhibited by UTP. In terms of biological role, catalyzes the reversible phosphorylation of UMP to UDP. In Psychromonas ingrahamii (strain DSM 17664 / CCUG 51855 / 37), this protein is Uridylate kinase.